We begin with the raw amino-acid sequence, 1043 residues long: Probable inorganic carbon transporter subunit DabA (1043 aa).

Zn(2+) contacts are provided by Cys460, Asp462, His719, and Cys734.

This sequence belongs to the inorganic carbon transporter (TC 9.A.2) DabA family. In terms of assembly, forms a complex with DabB. Zn(2+) is required as a cofactor.

The protein localises to the cell inner membrane. Its function is as follows. Part of an energy-coupled inorganic carbon pump. The chain is Probable inorganic carbon transporter subunit DabA from Thiobacillus denitrificans (strain ATCC 25259 / T1).